Here is a 384-residue protein sequence, read N- to C-terminus: Gastrin-releasing peptide receptor (384 aa).

The Extracellular segment spans residues 1–38 (MALNDCFLLNLEVDHFMHCNISSHSADLPVNDDWSHPG). N-linked (GlcNAc...) asparagine glycosylation is present at Asn20. A helical membrane pass occupies residues 39-62 (ILYVIPAVYGVIILIGLIGNITLI). Residues 63–76 (KIFCTVKSMRNVPN) lie on the Cytoplasmic side of the membrane. Residues 77 to 96 (LFISSLALGDLLLLITCAPV) traverse the membrane as a helical segment. Residues 97 to 114 (DASRYLADRWLFGRIGCK) are Extracellular-facing. Cysteines 113 and 196 form a disulfide. Residues 115-136 (LIPFIQLTSVGVSVFTLTALSA) traverse the membrane as a helical segment. The Cytoplasmic portion of the chain corresponds to 137 to 152 (DRYKAIVRPMDIQASH). A helical transmembrane segment spans residues 153–174 (ALMKICLKAAFIWIISMLLAIP). Residues 175–208 (EAVFSDLHPFHEESTNQTFISCAPYPHSNELHPK) lie on the Extracellular side of the membrane. A helical membrane pass occupies residues 209 to 234 (IHSMASFLVFYVIPLSIISVYYYFIA). The Cytoplasmic segment spans residues 235 to 264 (KNLIQSAYNLPVEGNIHVKKQIESRKRLAK). A helical transmembrane segment spans residues 265-285 (TVLVFVGLFAFCWLPNHVIYL). Over 286–298 (YRSYHYSEVDTSM) the chain is Extracellular. Residues 299–325 (LHFVTSICARLLAFTNSCVNPFALYLL) form a helical membrane-spanning segment. The Cytoplasmic segment spans residues 326-384 (SKSFRKQFNTQLLCCQPGLIIRSHSTGRSTTCMTSLKSTNPSVATFSLINGNICHERYV). Cys339 carries the S-palmitoyl cysteine lipid modification. Ser350 bears the Phosphoserine mark.

It belongs to the G-protein coupled receptor 1 family. As to expression, highly expressed in pancreas. Also expressed in stomach, adrenal cortex and brain. In brain, expressed in cells throughout the cortex.

The protein resides in the cell membrane. Its function is as follows. Receptor for gastrin-releasing peptide (GRP). Signals via association with G proteins that activate a phosphatidylinositol-calcium second messenger system, resulting in Akt phosphorylation. Contributes to the regulation of food intake. Contributes to the perception of prurient stimuli and transmission of itch signals in the spinal cord that promote scratching behavior, but does not play a role in the perception of pain. Contributes primarily to nonhistaminergic itch sensation. In one study, shown to act in the amygdala as part of an inhibitory network which inhibits memory specifically related to learned fear. In another study, shown to contribute to disinhibition of glutamatergic cells in the auditory cortex via signaling on vasoactive intestinal peptide-expressing cells which leads to enhanced auditory fear memories. Contributes to the induction of sighing through signaling in the pre-Botzinger complex, a cluster of several thousand neurons in the ventrolateral medulla responsible for inspiration during respiratory activity. This chain is Gastrin-releasing peptide receptor (GRPR), found in Homo sapiens (Human).